The chain runs to 320 residues: Cell-cell adhesion glycoprotein 64 (320 aa).

The first 19 residues, 1–19 (MNKFITLFVLLASVSVAMS), serve as a signal peptide directing secretion. Disulfide bonds link C39-C57, C67-C79, C73-C86, C98-C110, C104-C115, C123-C138, C132-C147, C157-C171, and C165-C176. N49 is a glycosylation site (N-linked (GlcNAc...) asparagine). N-linked (GlcNAc...) asparagine glycosylation occurs at N80. N141 and N158 each carry an N-linked (GlcNAc...) asparagine glycan. N-linked (GlcNAc...) asparagine glycosylation is present at N187. Cystine bridges form between C188-C202 and C194-C207. N216 carries N-linked (GlcNAc...) asparagine glycosylation. Cystine bridges form between C226/C246, C232/C234, C266/C285, and C270/C281. The GPI-like-anchor amidated serine moiety is linked to residue S298. The propeptide at 299-320 (SATTIAFNAFVVFAIVLSVLLF) is removed in mature form.

Post-translationally, contains 18 disulfide bonds. In terms of processing, the GPI-like-anchor contains a phosphoceramide group, rather than a phosphatidyl group.

Its subcellular location is the cell membrane. Its function is as follows. Cell-cell adhesion during development. This chain is Cell-cell adhesion glycoprotein 64, found in Heterostelium pallidum (Cellular slime mold).